The sequence spans 469 residues: UDP-N-acetylmuramate--L-alanine ligase (469 aa).

113–119 (GTHGKTT) provides a ligand contact to ATP.

It belongs to the MurCDEF family.

The protein resides in the cytoplasm. It catalyses the reaction UDP-N-acetyl-alpha-D-muramate + L-alanine + ATP = UDP-N-acetyl-alpha-D-muramoyl-L-alanine + ADP + phosphate + H(+). It functions in the pathway cell wall biogenesis; peptidoglycan biosynthesis. Its function is as follows. Cell wall formation. The sequence is that of UDP-N-acetylmuramate--L-alanine ligase from Neisseria meningitidis serogroup C / serotype 2a (strain ATCC 700532 / DSM 15464 / FAM18).